The following is a 58-amino-acid chain: MLQLLKNGRWNVMTLLITISILIVLAVLLVTIWTTVKAYNVKHTIDPPQENHSDSHNQ.

Residues 12 to 32 (VMTLLITISILIVLAVLLVTI) traverse the membrane as a helical segment.

It is found in the cell membrane. This is an uncharacterized protein from Bacillus subtilis (strain 168).